The chain runs to 173 residues: Shikimate kinase 1 (173 aa).

ATP is bound at residue glycine 14 to threonine 19. A Mg(2+)-binding site is contributed by serine 18. Aspartate 36, arginine 60, and glycine 82 together coordinate substrate. Residue arginine 120 participates in ATP binding. Arginine 140 contributes to the substrate binding site. Glutamine 157 is a binding site for ATP.

It belongs to the shikimate kinase family. Monomer. Mg(2+) serves as cofactor.

It localises to the cytoplasm. It catalyses the reaction shikimate + ATP = 3-phosphoshikimate + ADP + H(+). It participates in metabolic intermediate biosynthesis; chorismate biosynthesis; chorismate from D-erythrose 4-phosphate and phosphoenolpyruvate: step 5/7. In terms of biological role, catalyzes the specific phosphorylation of the 3-hydroxyl group of shikimic acid using ATP as a cosubstrate. The chain is Shikimate kinase 1 from Citrobacter koseri (strain ATCC BAA-895 / CDC 4225-83 / SGSC4696).